We begin with the raw amino-acid sequence, 188 residues long: Protein salivary glands marred (188 aa).

The protein belongs to the TNFAIP8 family. In terms of assembly, interacts with the Ste20-like MAP kinase msn.

The protein resides in the cytoplasm. Its subcellular location is the cytoskeleton. In terms of biological role, important for modulating JNK signaling, cytoskeletal remodeling and autophagy in larval salivary glands. During salivary gland development, involved in the positive regulation of the JNK signaling pathway, acting downstream of the TNF ligand egr and upstream of bsk. The protein is Protein salivary glands marred of Drosophila melanogaster (Fruit fly).